The following is a 688-amino-acid chain: Subtilisin-like protease 1 (688 aa).

The first 25 residues, 1-25 (MMLNKKVVALCTLTLHLFCIFLCLG), serve as a signal peptide directing secretion. Residues 26 to 217 (KEVRSEENGK…IESDKLVSAD (192 aa)) constitute a propeptide, inhibition peptide. Residues 99-129 (EKNKNDNHNNNNNNISSSSSSSSNTFGEEKE) form a disordered region. Positions 106–122 (HNNNNNNISSSSSSSSN) are enriched in low complexity. Asn-112 carries N-linked (GlcNAc...) asparagine glycosylation. The Ca(2+) site is built by Asn-145, Thr-148, and Pro-150. Asn-171 carries N-linked (GlcNAc...) asparagine glycosylation. Gly-205 contacts Ca(2+). The N-linked (GlcNAc...) asparagine glycan is linked to Asn-261. Disordered stretches follow at residues 264–284 (HAAT…DTFS) and 303–332 (NNNN…RPGK). Low complexity predominate over residues 303-328 (NNNNYYYSHSSNGHNSSSRNSSSSRS). N-linked (GlcNAc...) asparagine glycans are attached at residues Asn-317 and Asn-322. Position 337 (Asp-337) interacts with Ca(2+). The region spanning 343 to 661 (QWGLDLSRLD…AGYADINKAV (319 aa)) is the Peptidase S8 domain. Cystine bridges form between Cys-369–Cys-479 and Cys-458–Cys-475. Catalysis depends on Asp-372, which acts as the Charge relay system. Residues Asp-381, Glu-392, Arg-396, Phe-399, Asp-400, Asp-401, Asp-402, Asn-404, Ile-406, Asp-408, and Asp-409 each coordinate Ca(2+). N-linked (GlcNAc...) asparagine glycosylation is present at Asn-417. The active-site Charge relay system is His-428. Ca(2+) contacts are provided by Ile-439, Asn-442, Ile-444, and Val-446. N-linked (GlcNAc...) asparagine glycans are attached at residues Asn-488, Asn-501, and Asn-520. An intrachain disulfide couples Cys-521 to Cys-534. Asn-603 carries an N-linked (GlcNAc...) asparagine glycan. Ser-606 functions as the Charge relay system in the catalytic mechanism. The N-linked (GlcNAc...) asparagine glycan is linked to Asn-675.

The protein belongs to the peptidase S8 family. Heterodimer between p54 form and prodomain p31; the interaction inhibits p54 catalytic activity. Heterodimer p31-p54 is monomeric at basic pH and dimeric at acidic pH; dimerization is driven by the N-terminal prodomain (p31). Ca(2+) is required as a cofactor. Post-translationally, the prodomain (p31) is cleaved, probably by autocatalysis, during the transport to or in the Golgi apparatus, and remains non-covalently associated with the p54 form as an inhibitor. p54 is further cleaved into the p47 form. The p54-to-p47 conversion can be also autocatalytic. This cleavage is likely occurring in the exoneme prior to egress and is mediated by PMX/plasmepsin X. Heterodimer p31-p54 is activated by cleavage of prodomain (p31) by the aspartic protease PMX; cleavage by PMX abolishes inhibitory capacity of p31. Primary autocatalytic processing of SUB1 is essential for parasite growth; the p54-to-p47 conversion is dispensable for SUB1 functions in the parasites. The disulfide bond between Cys-521 and Cys-534 acts as a redox-sensitive disulfide switch. The oxidized form is required for catalytic activity. In terms of processing, the relevance of the N-glycosylation is not clear. In an insect expression system, SUB1 glycosylation appears to affect its processing into the active mature form suggesting that SUB1 may not be N-glycosylated in parasites.

Its subcellular location is the secreted. The protein localises to the parasitophorous vacuole lumen. The enzyme catalyses Hydrolysis of proteins with broad specificity for peptide bonds, and a preference for a large uncharged residue in P1. Hydrolyzes peptide amides.. P54 and probably p47 forms are inhibited by the non-covalent interaction with the cleaved propeptide. Inhibited by subtilisin propeptide-like protein SUB1-ProM. Inhibited by small molecule MRT12113. Functionally, serine protease which plays an essential role in merozoite invasion of and egress from host erythrocytes by processing and activating various merozoite surface and parasitophorous vacuole proteins. Mediates the proteolytic maturation of serine proteases SERA4, SERA5 and SERA6 just prior to merozoite egress. Prior to merozoite egress, cleaves merozoite surface proteins MSP1, MSP6 and MSP7, which form the MSP1/6/7 complex, and thereby may prime the parasite cell surface for invasion of fresh erythrocytes. Prior to merozoite egress, cleaves MSRP2 converting it to MSRP2 p25 form, and RAP1 converting it to RAP1 p67 form. This chain is Subtilisin-like protease 1, found in Plasmodium falciparum (isolate 3D7).